A 284-amino-acid chain; its full sequence is 4-hydroxybenzoate octaprenyltransferase (284 aa).

The next 9 membrane-spanning stretches (helical) occupy residues 19–39 (IPILLILWPTLTALVLASHGL), 42–62 (ISYLVIFTIGVVVMRTVGCII), 85–105 (GQLSIKNAIWLCISLTLVAFI), 107–127 (VLFLNLYTILLSFVALFLAIL), 134–154 (FFAIPQLILGLAFNFGIFMAF), 165–185 (AWIFYIATICWTIAYDTIYAL), 211–231 (ILLFNFLSLLLLIILGIYCDF), 233–253 (SFFYLGVVICSLFFVRNYFLY), and 261–281 (CINAFSANHWIGLIIFIIAVI).

This sequence belongs to the UbiA prenyltransferase family. The cofactor is Mg(2+).

It is found in the cell inner membrane. The catalysed reaction is all-trans-octaprenyl diphosphate + 4-hydroxybenzoate = 4-hydroxy-3-(all-trans-octaprenyl)benzoate + diphosphate. Its pathway is cofactor biosynthesis; ubiquinone biosynthesis. Its function is as follows. Catalyzes the prenylation of para-hydroxybenzoate (PHB) with an all-trans polyprenyl group. Mediates the second step in the final reaction sequence of ubiquinone-8 (UQ-8) biosynthesis, which is the condensation of the polyisoprenoid side chain with PHB, generating the first membrane-bound Q intermediate 3-octaprenyl-4-hydroxybenzoate. This is 4-hydroxybenzoate octaprenyltransferase from Francisella tularensis subsp. holarctica (strain LVS).